A 260-amino-acid chain; its full sequence is Acetylglutamate kinase (260 aa).

Residues 46-47, R68, and N160 contribute to the substrate site; that span reads GG.

Belongs to the acetylglutamate kinase family. ArgB subfamily.

It localises to the cytoplasm. The catalysed reaction is N-acetyl-L-glutamate + ATP = N-acetyl-L-glutamyl 5-phosphate + ADP. The protein operates within amino-acid biosynthesis; L-arginine biosynthesis; N(2)-acetyl-L-ornithine from L-glutamate: step 2/4. In terms of biological role, catalyzes the ATP-dependent phosphorylation of N-acetyl-L-glutamate. In Shewanella sp. (strain MR-7), this protein is Acetylglutamate kinase.